A 378-amino-acid polypeptide reads, in one-letter code: Erythronate-4-phosphate dehydrogenase (378 aa).

Positions 45 and 66 each coordinate substrate. NAD(+) contacts are provided by Asp146 and Thr175. The active site involves Arg208. Asp232 contacts NAD(+). Glu237 is an active-site residue. The Proton donor role is filled by His254. Residue Gly257 participates in NAD(+) binding. Tyr258 provides a ligand contact to substrate.

This sequence belongs to the D-isomer specific 2-hydroxyacid dehydrogenase family. PdxB subfamily. As to quaternary structure, homodimer.

Its subcellular location is the cytoplasm. The catalysed reaction is 4-phospho-D-erythronate + NAD(+) = (R)-3-hydroxy-2-oxo-4-phosphooxybutanoate + NADH + H(+). It participates in cofactor biosynthesis; pyridoxine 5'-phosphate biosynthesis; pyridoxine 5'-phosphate from D-erythrose 4-phosphate: step 2/5. Catalyzes the oxidation of erythronate-4-phosphate to 3-hydroxy-2-oxo-4-phosphonooxybutanoate. This is Erythronate-4-phosphate dehydrogenase from Enterobacter sp. (strain 638).